A 178-amino-acid polypeptide reads, in one-letter code: Actin-related protein 2/3 complex subunit 3-A (178 aa).

It belongs to the ARPC3 family. Component of the Arp2/3 complex composed of actr2/arp2, actr3/arp3, arpc1 (arpc1a or arpc1b), arpc2, arpc3, arpc4 and arpc5.

Its subcellular location is the cytoplasm. The protein resides in the cytoskeleton. It is found in the cell projection. It localises to the nucleus. Functionally, component of the Arp2/3 complex, a multiprotein complex that mediates actin polymerization upon stimulation by nucleation-promoting factor (NPF). The Arp2/3 complex mediates the formation of branched actin networks in the cytoplasm, providing the force for cell motility. In addition to its role in the cytoplasmic cytoskeleton, the Arp2/3 complex also promotes actin polymerization in the nucleus, thereby regulating gene transcription and repair of damaged DNA. The Arp2/3 complex promotes homologous recombination (HR) repair in response to DNA damage by promoting nuclear actin polymerization, leading to drive motility of double-strand breaks (DSBs). The chain is Actin-related protein 2/3 complex subunit 3-A (arpc3-a) from Xenopus laevis (African clawed frog).